The primary structure comprises 131 residues: Holo-[acyl-carrier-protein] synthase (131 aa).

Mg(2+) contacts are provided by Asp-8 and Glu-59.

Belongs to the P-Pant transferase superfamily. AcpS family. It depends on Mg(2+) as a cofactor.

The protein localises to the cytoplasm. The enzyme catalyses apo-[ACP] + CoA = holo-[ACP] + adenosine 3',5'-bisphosphate + H(+). Functionally, transfers the 4'-phosphopantetheine moiety from coenzyme A to a Ser of acyl-carrier-protein. This chain is Holo-[acyl-carrier-protein] synthase, found in Rickettsia massiliae (strain Mtu5).